We begin with the raw amino-acid sequence, 76 residues long: Conotoxin VnMEKL-012 (76 aa).

An N-terminal signal peptide occupies residues 1 to 18 (MKLTILFLVAAVLMSTQA). A propeptide spanning residues 19–42 (LIQHDGEKSQKAKMKFLTARTLSA) is cleaved from the precursor. Cystine bridges form between Cys-49–Cys-65, Cys-56–Cys-70, and Cys-64–Cys-74.

Belongs to the conotoxin O2 superfamily. As to expression, expressed by the venom duct.

The protein localises to the secreted. This Conus ventricosus (Mediterranean cone) protein is Conotoxin VnMEKL-012.